The following is a 54-amino-acid chain: uncharacterized protein (54 aa).

This is an uncharacterized protein from Rhizobium etli.